Reading from the N-terminus, the 138-residue chain is Ribosome-binding factor A (138 aa).

The disordered stretch occupies residues alanine 117 to glutamate 138.

This sequence belongs to the RbfA family. Monomer. Binds 30S ribosomal subunits, but not 50S ribosomal subunits or 70S ribosomes.

Its subcellular location is the cytoplasm. One of several proteins that assist in the late maturation steps of the functional core of the 30S ribosomal subunit. Associates with free 30S ribosomal subunits (but not with 30S subunits that are part of 70S ribosomes or polysomes). Required for efficient processing of 16S rRNA. May interact with the 5'-terminal helix region of 16S rRNA. The polypeptide is Ribosome-binding factor A (Pseudomonas syringae pv. syringae (strain B728a)).